We begin with the raw amino-acid sequence, 169 residues long: Ribosome maturation factor RimM (169 aa).

Residues glutamate 95–leucine 168 enclose the PRC barrel domain.

This sequence belongs to the RimM family. As to quaternary structure, binds ribosomal protein uS19.

It is found in the cytoplasm. Its function is as follows. An accessory protein needed during the final step in the assembly of 30S ribosomal subunit, possibly for assembly of the head region. Essential for efficient processing of 16S rRNA. May be needed both before and after RbfA during the maturation of 16S rRNA. It has affinity for free ribosomal 30S subunits but not for 70S ribosomes. This Desulforamulus reducens (strain ATCC BAA-1160 / DSM 100696 / MI-1) (Desulfotomaculum reducens) protein is Ribosome maturation factor RimM.